A 423-amino-acid polypeptide reads, in one-letter code: Probable serine/threonine-protein kinase PBL5 (423 aa).

The disordered stretch occupies residues 1-66 (MGCFGCSKKS…DVNNEGGVGK (66 aa)). Glycine 2 is lipidated: N-myristoyl glycine. The S-palmitoyl cysteine moiety is linked to residue cysteine 3. Basic and acidic residues predominate over residues 12-22 (KRSETNKDTVI). Over residues 43–52 (TQPSSDSTKV) the composition is skewed to polar residues. Threonine 92 carries the phosphothreonine modification. One can recognise a Protein kinase domain in the interval 103-380 (FRSDCFLGEG…SDVVLALNFL (278 aa)). ATP is bound by residues 109–117 (LGEGGFGKV) and lysine 132. Residue tyrosine 177 is modified to Phosphotyrosine. The Proton acceptor role is filled by aspartate 230. Residues serine 234 and serine 264 each carry the phosphoserine modification. 2 positions are modified to phosphothreonine: threonine 265 and threonine 270. Tyrosine 278 is subject to Phosphotyrosine. Residues 383 to 398 (SKYDPNSPSSSSGKNP) show a composition bias toward low complexity. Residues 383 to 423 (SKYDPNSPSSSSGKNPSFHRDRDDEEKRPHLVKETECEGSS) form a disordered region. A compositionally biased stretch (basic and acidic residues) spans 400-423 (FHRDRDDEEKRPHLVKETECEGSS).

Belongs to the protein kinase superfamily. Ser/Thr protein kinase family. Palmitoylation at Cys-3 and Cys-6 are required for plasma membrane location.

The protein localises to the cell membrane. The catalysed reaction is L-seryl-[protein] + ATP = O-phospho-L-seryl-[protein] + ADP + H(+). It catalyses the reaction L-threonyl-[protein] + ATP = O-phospho-L-threonyl-[protein] + ADP + H(+). In terms of biological role, may be involved in plant defense signaling. In Arabidopsis thaliana (Mouse-ear cress), this protein is Probable serine/threonine-protein kinase PBL5.